Reading from the N-terminus, the 478-residue chain is Methionine aminopeptidase 2-1 (478 aa).

The segment at 1–124 (MGSKSPEGHN…PRVPLSTLFP (124 aa)) is disordered. Over residues 46–56 (NDDDDADDDEK) the composition is skewed to acidic residues. Positions 92-104 (KKKKKRKRSKKKA) are enriched in basic residues. His230 contributes to the substrate binding site. A divalent metal cation-binding residues include Asp251, Asp262, and His331. His339 contacts substrate. Residues Glu364 and Glu459 each coordinate a divalent metal cation.

Belongs to the peptidase M24A family. Methionine aminopeptidase eukaryotic type 2 subfamily. Co(2+) is required as a cofactor. The cofactor is Zn(2+). It depends on Mn(2+) as a cofactor. Fe(2+) serves as cofactor.

It localises to the cytoplasm. It carries out the reaction Release of N-terminal amino acids, preferentially methionine, from peptides and arylamides.. In terms of biological role, cotranslationally removes the N-terminal methionine from nascent proteins. The N-terminal methionine is often cleaved when the second residue in the primary sequence is small and uncharged (Met-Ala-, Cys, Gly, Pro, Ser, Thr, or Val). The sequence is that of Methionine aminopeptidase 2-1 from Aspergillus clavatus (strain ATCC 1007 / CBS 513.65 / DSM 816 / NCTC 3887 / NRRL 1 / QM 1276 / 107).